The chain runs to 215 residues: Adenylate kinase (215 aa).

10 to 15 (GAGKGT) is an ATP binding site. An NMP region spans residues 30–59 (STGDMLRAAVKAGTELGLKAKSVMDSGGLV). Residues Thr-31, Arg-36, 57–59 (GLV), 85–88 (GFPR), and Gln-92 contribute to the AMP site. An LID region spans residues 122–159 (GRRVHEASGRVYHTVYNPPKIAGKDDITGEDLVQRKDD). ATP-binding positions include Arg-123 and 132–133 (VY). Residues Arg-156 and Arg-167 each coordinate AMP. ATP is bound at residue Gly-201.

Belongs to the adenylate kinase family. Monomer.

The protein localises to the cytoplasm. It carries out the reaction AMP + ATP = 2 ADP. It functions in the pathway purine metabolism; AMP biosynthesis via salvage pathway; AMP from ADP: step 1/1. In terms of biological role, catalyzes the reversible transfer of the terminal phosphate group between ATP and AMP. Plays an important role in cellular energy homeostasis and in adenine nucleotide metabolism. This is Adenylate kinase from Pseudomonas fluorescens (strain ATCC BAA-477 / NRRL B-23932 / Pf-5).